We begin with the raw amino-acid sequence, 392 residues long: Probable tRNA sulfurtransferase (392 aa).

The region spanning 63-169 (GRAADAAADT…DAEAFVFLTH (107 aa)) is the THUMP domain. ATP-binding positions include 187-188 (LV), R270, G292, and Q301.

Belongs to the ThiI family.

The protein localises to the cytoplasm. It carries out the reaction [ThiI sulfur-carrier protein]-S-sulfanyl-L-cysteine + a uridine in tRNA + 2 reduced [2Fe-2S]-[ferredoxin] + ATP + H(+) = [ThiI sulfur-carrier protein]-L-cysteine + a 4-thiouridine in tRNA + 2 oxidized [2Fe-2S]-[ferredoxin] + AMP + diphosphate. The enzyme catalyses [ThiS sulfur-carrier protein]-C-terminal Gly-Gly-AMP + S-sulfanyl-L-cysteinyl-[cysteine desulfurase] + AH2 = [ThiS sulfur-carrier protein]-C-terminal-Gly-aminoethanethioate + L-cysteinyl-[cysteine desulfurase] + A + AMP + 2 H(+). Its pathway is cofactor biosynthesis; thiamine diphosphate biosynthesis. Catalyzes the ATP-dependent transfer of a sulfur to tRNA to produce 4-thiouridine in position 8 of tRNAs, which functions as a near-UV photosensor. Also catalyzes the transfer of sulfur to the sulfur carrier protein ThiS, forming ThiS-thiocarboxylate. This is a step in the synthesis of thiazole, in the thiamine biosynthesis pathway. The sulfur is donated as persulfide by IscS. In Halobacterium salinarum (strain ATCC 29341 / DSM 671 / R1), this protein is Probable tRNA sulfurtransferase.